The chain runs to 124 residues: Fluoride-specific ion channel FluC 2 (124 aa).

4 consecutive transmembrane segments (helical) span residues 1–21 (MNFL…YAIT), 36–58 (SNLP…FIFG), 63–85 (VFIY…TMNT), and 104–124 (LSSY…AILF). G75 and T78 together coordinate Na(+).

Belongs to the fluoride channel Fluc/FEX (TC 1.A.43) family. In terms of assembly, heterodimer composed of FluC1 and FluC2. Neither FluC1 nor FluC2 alone catalyzes fluoride efflux from liposomes.

It localises to the cell membrane. It carries out the reaction fluoride(in) = fluoride(out). With respect to regulation, na(+) is not transported, but it plays an essential structural role and its presence is essential for fluoride channel function. Fluoride-specific ion channel. Important for reducing fluoride concentration in the cell, thus reducing its toxicity. In Lactobacillus acidophilus (strain ATCC 700396 / NCK56 / N2 / NCFM), this protein is Fluoride-specific ion channel FluC 2.